The chain runs to 248 residues: 5'-nucleotidase SurE (248 aa).

Residues Asp-8, Asp-9, Ser-39, and Asn-91 each coordinate a divalent metal cation.

This sequence belongs to the SurE nucleotidase family. A divalent metal cation serves as cofactor.

Its subcellular location is the cytoplasm. The enzyme catalyses a ribonucleoside 5'-phosphate + H2O = a ribonucleoside + phosphate. In terms of biological role, nucleotidase that shows phosphatase activity on nucleoside 5'-monophosphates. This is 5'-nucleotidase SurE from Citrifermentans bemidjiense (strain ATCC BAA-1014 / DSM 16622 / JCM 12645 / Bem) (Geobacter bemidjiensis).